A 104-amino-acid polypeptide reads, in one-letter code: L-rhamnose mutarotase (104 aa).

Residue Y18 coordinates substrate. H22 functions as the Proton donor in the catalytic mechanism. Residues Y41 and 76–77 (WW) each bind substrate.

This sequence belongs to the rhamnose mutarotase family. As to quaternary structure, homodimer.

It is found in the cytoplasm. It catalyses the reaction alpha-L-rhamnose = beta-L-rhamnose. Its pathway is carbohydrate metabolism; L-rhamnose metabolism. In terms of biological role, involved in the anomeric conversion of L-rhamnose. The polypeptide is L-rhamnose mutarotase (Salmonella agona (strain SL483)).